The following is a 261-amino-acid chain: Tryptophan synthase alpha chain (261 aa).

Residues glutamate 49 and aspartate 60 each act as proton acceptor in the active site.

Belongs to the TrpA family. Tetramer of two alpha and two beta chains.

The enzyme catalyses (1S,2R)-1-C-(indol-3-yl)glycerol 3-phosphate + L-serine = D-glyceraldehyde 3-phosphate + L-tryptophan + H2O. Its pathway is amino-acid biosynthesis; L-tryptophan biosynthesis; L-tryptophan from chorismate: step 5/5. The alpha subunit is responsible for the aldol cleavage of indoleglycerol phosphate to indole and glyceraldehyde 3-phosphate. The polypeptide is Tryptophan synthase alpha chain (Roseiflexus sp. (strain RS-1)).